The sequence spans 189 residues: NADH-ubiquinone oxidoreductase 20.9 kDa subunit (189 aa).

The helical transmembrane segment at 73–88 (AMRLATAVGFFGGFLY) threads the bilayer.

As to quaternary structure, complex I is composed of about 40 different subunits. Post-translationally, the N-terminus is blocked.

It is found in the mitochondrion inner membrane. It catalyses the reaction a ubiquinone + NADH + 5 H(+)(in) = a ubiquinol + NAD(+) + 4 H(+)(out). Functionally, transfer of electrons from NADH to the respiratory chain. The immediate electron acceptor for the enzyme is believed to be ubiquinone. In Neurospora crassa (strain ATCC 24698 / 74-OR23-1A / CBS 708.71 / DSM 1257 / FGSC 987), this protein is NADH-ubiquinone oxidoreductase 20.9 kDa subunit (nuo20.9).